The following is a 241-amino-acid chain: Methylosome subunit pICln (241 aa).

The tract at residues 88–112 (EDKEAHMADQEEEESEDDDDDEEPI) is disordered. Residues 97 to 112 (QEEEESEDDDDDEEPI) are compositionally biased toward acidic residues.

This sequence belongs to the pICln (TC 1.A.47) family. As to quaternary structure, component of the methylosome, a 20S complex containing at least clns1a/picln, prmt5/skb1 and wdr77/mep50; may mediate snrpd1 and snrpd3 methylation. Forms a 6S pICln-Sm complex composed of clns1a/picln, snrpd1, snrpd2, snrpe, snrpf and snrpg; ring-like structure where clns1a/pICln mimics additional Sm proteins and which is unable to assemble into the core snRNP.

The protein localises to the cytoplasm. The protein resides in the cytosol. It is found in the nucleus. Its subcellular location is the cytoskeleton. Its function is as follows. Involved in both the assembly of spliceosomal snRNPs and the methylation of Sm proteins. Chaperone that regulates the assembly of spliceosomal U1, U2, U4 and U5 small nuclear ribonucleoproteins (snRNPs), the building blocks of the spliceosome, and thereby plays an important role in the splicing of cellular pre-mRNAs. Most spliceosomal snRNPs contain a common set of Sm proteins SNRPB, SNRPD1, SNRPD2, SNRPD3, SNRPE, SNRPF and SNRPG that assemble in a heptameric protein ring on the Sm site of the small nuclear RNA to form the core snRNP (Sm core). In the cytosol, the Sm proteins SNRPD1, SNRPD2, SNRPE, SNRPF and SNRPG are trapped in an inactive 6S pICln-Sm complex by the chaperone CLNS1A that controls the assembly of the core snRNP. Dissociation by the SMN complex of CLNS1A from the trapped Sm proteins and their transfer to an SMN-Sm complex triggers the assembly of core snRNPs and their transport to the nucleus. The protein is Methylosome subunit pICln (clns1a) of Xenopus laevis (African clawed frog).